The sequence spans 392 residues: Tryptophan synthase beta chain (392 aa).

Lys-84 carries the N6-(pyridoxal phosphate)lysine modification.

The protein belongs to the TrpB family. In terms of assembly, tetramer of two alpha and two beta chains. Pyridoxal 5'-phosphate is required as a cofactor.

It catalyses the reaction (1S,2R)-1-C-(indol-3-yl)glycerol 3-phosphate + L-serine = D-glyceraldehyde 3-phosphate + L-tryptophan + H2O. It participates in amino-acid biosynthesis; L-tryptophan biosynthesis; L-tryptophan from chorismate: step 5/5. Functionally, the beta subunit is responsible for the synthesis of L-tryptophan from indole and L-serine. The chain is Tryptophan synthase beta chain from Campylobacter jejuni subsp. jejuni serotype O:6 (strain 81116 / NCTC 11828).